Reading from the N-terminus, the 128-residue chain is Small ribosomal subunit protein uS12 (128 aa).

The residue at position 89 (aspartate 89) is a 3-methylthioaspartic acid.

This sequence belongs to the universal ribosomal protein uS12 family. As to quaternary structure, part of the 30S ribosomal subunit. Contacts proteins S8 and S17. May interact with IF1 in the 30S initiation complex.

Its function is as follows. With S4 and S5 plays an important role in translational accuracy. Interacts with and stabilizes bases of the 16S rRNA that are involved in tRNA selection in the A site and with the mRNA backbone. Located at the interface of the 30S and 50S subunits, it traverses the body of the 30S subunit contacting proteins on the other side and probably holding the rRNA structure together. The combined cluster of proteins S8, S12 and S17 appears to hold together the shoulder and platform of the 30S subunit. In Campylobacter jejuni subsp. jejuni serotype O:6 (strain 81116 / NCTC 11828), this protein is Small ribosomal subunit protein uS12.